Consider the following 572-residue polypeptide: Proline--tRNA ligase (572 aa).

The protein belongs to the class-II aminoacyl-tRNA synthetase family. ProS type 1 subfamily. In terms of assembly, homodimer.

It localises to the cytoplasm. It catalyses the reaction tRNA(Pro) + L-proline + ATP = L-prolyl-tRNA(Pro) + AMP + diphosphate. Its function is as follows. Catalyzes the attachment of proline to tRNA(Pro) in a two-step reaction: proline is first activated by ATP to form Pro-AMP and then transferred to the acceptor end of tRNA(Pro). As ProRS can inadvertently accommodate and process non-cognate amino acids such as alanine and cysteine, to avoid such errors it has two additional distinct editing activities against alanine. One activity is designated as 'pretransfer' editing and involves the tRNA(Pro)-independent hydrolysis of activated Ala-AMP. The other activity is designated 'posttransfer' editing and involves deacylation of mischarged Ala-tRNA(Pro). The misacylated Cys-tRNA(Pro) is not edited by ProRS. The protein is Proline--tRNA ligase of Psychrobacter cryohalolentis (strain ATCC BAA-1226 / DSM 17306 / VKM B-2378 / K5).